We begin with the raw amino-acid sequence, 417 residues long: Serine hydroxymethyltransferase (417 aa).

Residue K54 is modified to N6-acetyllysine. (6S)-5,6,7,8-tetrahydrofolate contacts are provided by residues L121 and 125–127 (GHL). Position 229 is an N6-(pyridoxal phosphate)lysine (K229). N6-acetyllysine is present on residues K250, K285, and K354. Position 355-357 (355-357 (SPF)) interacts with (6S)-5,6,7,8-tetrahydrofolate. K375 bears the N6-acetyllysine mark.

It belongs to the SHMT family. As to quaternary structure, homodimer. Pyridoxal 5'-phosphate serves as cofactor.

It localises to the cytoplasm. The enzyme catalyses (6R)-5,10-methylene-5,6,7,8-tetrahydrofolate + glycine + H2O = (6S)-5,6,7,8-tetrahydrofolate + L-serine. It functions in the pathway one-carbon metabolism; tetrahydrofolate interconversion. The protein operates within amino-acid biosynthesis; glycine biosynthesis; glycine from L-serine: step 1/1. Catalyzes the reversible interconversion of serine and glycine with tetrahydrofolate (THF) serving as the one-carbon carrier. This reaction serves as the major source of one-carbon groups required for the biosynthesis of purines, thymidylate, methionine, and other important biomolecules. Also exhibits THF-independent aldolase activity toward beta-hydroxyamino acids, producing glycine and aldehydes, via a retro-aldol mechanism. This chain is Serine hydroxymethyltransferase, found in Escherichia coli O157:H7.